Here is a 226-residue protein sequence, read N- to C-terminus: Enolase-phosphatase E1 (226 aa).

This sequence belongs to the HAD-like hydrolase superfamily. MasA/MtnC family. Monomer. Requires Mg(2+) as cofactor.

The enzyme catalyses 5-methylsulfanyl-2,3-dioxopentyl phosphate + H2O = 1,2-dihydroxy-5-(methylsulfanyl)pent-1-en-3-one + phosphate. It participates in amino-acid biosynthesis; L-methionine biosynthesis via salvage pathway; L-methionine from S-methyl-5-thio-alpha-D-ribose 1-phosphate: step 3/6. The protein operates within amino-acid biosynthesis; L-methionine biosynthesis via salvage pathway; L-methionine from S-methyl-5-thio-alpha-D-ribose 1-phosphate: step 4/6. Bifunctional enzyme that catalyzes the enolization of 2,3-diketo-5-methylthiopentyl-1-phosphate (DK-MTP-1-P) into the intermediate 2-hydroxy-3-keto-5-methylthiopentenyl-1-phosphate (HK-MTPenyl-1-P), which is then dephosphorylated to form the acireductone 1,2-dihydroxy-3-keto-5-methylthiopentene (DHK-MTPene). The sequence is that of Enolase-phosphatase E1 from Alcanivorax borkumensis (strain ATCC 700651 / DSM 11573 / NCIMB 13689 / SK2).